A 407-amino-acid chain; its full sequence is 4-hydroxy-3-methylbut-2-en-1-yl diphosphate synthase (ferredoxin) (407 aa).

Residues Cys312, Cys315, Cys346, and Glu353 each contribute to the [4Fe-4S] cluster site.

The protein belongs to the IspG family. It depends on [4Fe-4S] cluster as a cofactor.

It catalyses the reaction (2E)-4-hydroxy-3-methylbut-2-enyl diphosphate + 2 oxidized [2Fe-2S]-[ferredoxin] + H2O = 2-C-methyl-D-erythritol 2,4-cyclic diphosphate + 2 reduced [2Fe-2S]-[ferredoxin] + H(+). It participates in isoprenoid biosynthesis; isopentenyl diphosphate biosynthesis via DXP pathway; isopentenyl diphosphate from 1-deoxy-D-xylulose 5-phosphate: step 5/6. Functionally, converts 2C-methyl-D-erythritol 2,4-cyclodiphosphate (ME-2,4cPP) into 1-hydroxy-2-methyl-2-(E)-butenyl 4-diphosphate. The chain is 4-hydroxy-3-methylbut-2-en-1-yl diphosphate synthase (ferredoxin) from Synechococcus elongatus (strain ATCC 33912 / PCC 7942 / FACHB-805) (Anacystis nidulans R2).